Reading from the N-terminus, the 101-residue chain is NAD(P)H-quinone oxidoreductase subunit 4L, chloroplastic (101 aa).

3 consecutive transmembrane segments (helical) span residues 2–22, 32–52, and 61–81; these read MFEH…YGLI, ICLE…SDLF, and IFAI…LSIL.

This sequence belongs to the complex I subunit 4L family. In terms of assembly, NDH is composed of at least 16 different subunits, 5 of which are encoded in the nucleus.

Its subcellular location is the plastid. It is found in the chloroplast thylakoid membrane. The catalysed reaction is a plastoquinone + NADH + (n+1) H(+)(in) = a plastoquinol + NAD(+) + n H(+)(out). It carries out the reaction a plastoquinone + NADPH + (n+1) H(+)(in) = a plastoquinol + NADP(+) + n H(+)(out). Its function is as follows. NDH shuttles electrons from NAD(P)H:plastoquinone, via FMN and iron-sulfur (Fe-S) centers, to quinones in the photosynthetic chain and possibly in a chloroplast respiratory chain. The immediate electron acceptor for the enzyme in this species is believed to be plastoquinone. Couples the redox reaction to proton translocation, and thus conserves the redox energy in a proton gradient. The chain is NAD(P)H-quinone oxidoreductase subunit 4L, chloroplastic from Agrostis stolonifera (Creeping bentgrass).